Consider the following 181-residue polypeptide: Alkyl hydroperoxide reductase AhpD (181 aa).

Cys-131 serves as the catalytic Proton donor. A disulfide bridge links Cys-131 with Cys-134. The active-site Cysteine sulfenic acid (-SOH) intermediate is Cys-134.

The protein belongs to the AhpD family.

The enzyme catalyses N(6)-[(R)-dihydrolipoyl]-L-lysyl-[lipoyl-carrier protein] + a hydroperoxide = N(6)-[(R)-lipoyl]-L-lysyl-[lipoyl-carrier protein] + an alcohol + H2O. Functionally, antioxidant protein with alkyl hydroperoxidase activity. Required for the reduction of the AhpC active site cysteine residues and for the regeneration of the AhpC enzyme activity. The sequence is that of Alkyl hydroperoxide reductase AhpD from Bradyrhizobium sp. (strain ORS 278).